Reading from the N-terminus, the 249-residue chain is Syntaxin-10 (249 aa).

At Ser-2 the chain carries N-acetylserine. At 2–228 (SLEDPFFVVR…VSHMTSDRRQ (227 aa)) the chain is on the cytoplasmic side. Positions 41–69 (EELDWTTNELRNGLRSIEWDLEDLEETIG) form a coiled coil. Ser-108 carries the post-translational modification Phosphoserine. Phosphothreonine is present on Thr-110. Ser-134, Ser-140, and Ser-143 each carry phosphoserine. Residues 157–219 (QLIMDEQDQQ…DGVLRKLAKV (63 aa)) form the t-SNARE coiled-coil homology domain. A helical; Anchor for type IV membrane protein transmembrane segment spans residues 229-249 (WCAIAVLVGVLLLVLILLFSL).

The protein belongs to the syntaxin family. In terms of assembly, interacts with VPS52. As to expression, expressed at high levels in heart, skeletal muscle and pancreas.

The protein resides in the golgi apparatus membrane. Functionally, SNARE involved in vesicular transport from the late endosomes to the trans-Golgi network. The polypeptide is Syntaxin-10 (STX10) (Homo sapiens (Human)).